Consider the following 407-residue polypeptide: Argininosuccinate synthase (407 aa).

ATP contacts are provided by residues 13–21 and Ala-40; that span reads AYSGGLDTS. Residues Tyr-91 and Ser-96 each coordinate L-citrulline. Gly-121 serves as a coordination point for ATP. Thr-123, Asn-127, and Asp-128 together coordinate L-aspartate. Asn-127 is an L-citrulline binding site. Residues Arg-131, Ser-182, Ser-191, Glu-267, and Tyr-279 each contribute to the L-citrulline site.

This sequence belongs to the argininosuccinate synthase family. Type 1 subfamily. As to quaternary structure, homotetramer.

The protein resides in the cytoplasm. It catalyses the reaction L-citrulline + L-aspartate + ATP = 2-(N(omega)-L-arginino)succinate + AMP + diphosphate + H(+). It functions in the pathway amino-acid biosynthesis; L-arginine biosynthesis; L-arginine from L-ornithine and carbamoyl phosphate: step 2/3. In Bartonella bacilliformis (strain ATCC 35685 / KC583 / Herrer 020/F12,63), this protein is Argininosuccinate synthase.